The chain runs to 289 residues: Acetyl-coenzyme A carboxylase carboxyl transferase subunit beta (289 aa).

The region spanning 28-289 (LWSKCPSCEA…ALLQKLPAAA (262 aa)) is the CoA carboxyltransferase N-terminal domain. Positions 32, 35, 51, and 54 each coordinate Zn(2+). Residues 32-54 (CPSCEAVLYATDLENNLQVCPKC) form a C4-type zinc finger.

The protein belongs to the AccD/PCCB family. Acetyl-CoA carboxylase is a heterohexamer composed of biotin carboxyl carrier protein (AccB), biotin carboxylase (AccC) and two subunits each of ACCase subunit alpha (AccA) and ACCase subunit beta (AccD). Requires Zn(2+) as cofactor.

The protein localises to the cytoplasm. It catalyses the reaction N(6)-carboxybiotinyl-L-lysyl-[protein] + acetyl-CoA = N(6)-biotinyl-L-lysyl-[protein] + malonyl-CoA. The protein operates within lipid metabolism; malonyl-CoA biosynthesis; malonyl-CoA from acetyl-CoA: step 1/1. Its function is as follows. Component of the acetyl coenzyme A carboxylase (ACC) complex. Biotin carboxylase (BC) catalyzes the carboxylation of biotin on its carrier protein (BCCP) and then the CO(2) group is transferred by the transcarboxylase to acetyl-CoA to form malonyl-CoA. This is Acetyl-coenzyme A carboxylase carboxyl transferase subunit beta from Dechloromonas aromatica (strain RCB).